A 279-amino-acid chain; its full sequence is Probable diacylglycerol pyrophosphate phosphatase 1 (279 aa).

The Lumenal segment spans residues 1–17 (MEAVGKHVKLFWNVYSD). Residues 18-38 (YAVLIAISLSYFVFDVLMLPF) form a helical membrane-spanning segment. Over 39–58 (TRQFSLEDITISHPFALHEQ) the chain is Cytoplasmic. A helical membrane pass occupies residues 59 to 79 (VPTKYLGIICVFFPALVLYGF). The Lumenal portion of the chain corresponds to 80 to 86 (GKLRNNS). A helical membrane pass occupies residues 87–107 (LLFWKSLMGLLYSTMVCGLCV). Residues 108–163 (SLLKNAVGRPRPDFLARCQPFESTPKTGLVDVLSCSVPWSDKVLQDGFRSFPSGHT) are Cytoplasmic-facing. Residues 111–119 (KNAVGRPRP) form a phosphatase sequence motif I region. The segment at 159-162 (PSGH) is phosphatase sequence motif II. A helical transmembrane segment spans residues 164–184 (SFSFAGLGFLAIFLAGQLKMF). Over 185 to 187 (RNK) the chain is Lumenal. A helical transmembrane segment spans residues 188–208 (TSSWKVVVPLVPLSIASWIGL). Over 209–220 (SRSQDYRHHKED) the chain is Cytoplasmic. Residues 209-220 (SRSQDYRHHKED) are phosphatase sequence motif III. A helical membrane pass occupies residues 221–241 (IAVGALFGFAIAYVVYRQLFP). Residues 242 to 279 (PLDHHNADILYVQAELDEGYTNVHSAGNSSATNAEQMV) lie on the Lumenal side of the membrane.

The protein belongs to the PA-phosphatase related phosphoesterase family.

It is found in the vacuole membrane. Its subcellular location is the endoplasmic reticulum membrane. The catalysed reaction is a 1,2-diacyl-sn-glycerol 3-diphosphate + H2O = a 1,2-diacyl-sn-glycero-3-phosphate + phosphate + H(+). The enzyme catalyses a 1,2-diacyl-sn-glycero-3-phosphate + H2O = a 1,2-diacyl-sn-glycerol + phosphate. Functionally, catalyzes the dephosphorylation of diacylglycerol phosphate (DGPP) to phosphatidate (PA) and the subsequent dephosphorylation of PA to diacylglycerol (DAG). This is Probable diacylglycerol pyrophosphate phosphatase 1 (dpp1) from Schizosaccharomyces pombe (strain 972 / ATCC 24843) (Fission yeast).